The primary structure comprises 379 residues: MKLHEYQARDILARYGIPVTGGGVATTPAEARTIAEQIGGRVVVKAQVFVGGRGKAGGVKLADTPEQAEQVASQILGMNIKGLTVEKVLVAEAITYEREIYLGAIMDRASRRIVMMASAEGGVEIEEVARTNPEAIVKVAAHPMMGLLDFQARDLAYGIGLTDGRQARQFAQIATALYRAYMDVDASLAEINPLVVRADGSLQALDSKIVLDDSGLFRHPDLEAMRDSSDEPEAEQRAREAGITYIKLDGNIGCMVNGAGLAMATMDVVKLYGGEPANFLDIGGGAGKEKVKTALQIILSDPNVKAVMFNIFGGITRVDEVAKGIIAALEEVNTDVPMIARLVGTNEEEGRRILAESALIPAATLAEAAEKAVQAAQSR.

In terms of domain architecture, ATP-grasp spans 9 to 237; that stretch reads RDILARYGIP…SSDEPEAEQR (229 aa). ATP contacts are provided by residues Lys-45, 52–54, Ile-94, and Glu-99; that span reads GRG. Mg(2+)-binding residues include Asn-192 and Asp-206. Residues Asn-257 and 314–316 contribute to the substrate site; that span reads GIT.

This sequence belongs to the succinate/malate CoA ligase beta subunit family. As to quaternary structure, heterotetramer of two alpha and two beta subunits. The cofactor is Mg(2+).

It catalyses the reaction succinate + ATP + CoA = succinyl-CoA + ADP + phosphate. The enzyme catalyses GTP + succinate + CoA = succinyl-CoA + GDP + phosphate. It functions in the pathway carbohydrate metabolism; tricarboxylic acid cycle; succinate from succinyl-CoA (ligase route): step 1/1. Succinyl-CoA synthetase functions in the citric acid cycle (TCA), coupling the hydrolysis of succinyl-CoA to the synthesis of either ATP or GTP and thus represents the only step of substrate-level phosphorylation in the TCA. The beta subunit provides nucleotide specificity of the enzyme and binds the substrate succinate, while the binding sites for coenzyme A and phosphate are found in the alpha subunit. In Roseiflexus sp. (strain RS-1), this protein is Succinate--CoA ligase [ADP-forming] subunit beta.